A 269-amino-acid polypeptide reads, in one-letter code: Type 4 prepilin-like proteins leader peptide-processing enzyme (269 aa).

7 consecutive transmembrane segments (helical) span residues Met13–Trp33, Tyr102–Glu122, Gly124–Leu144, Gln147–Ala167, Val178–Val198, Leu210–Ile230, and Leu249–Phe269.

This sequence belongs to the peptidase A24 family.

It is found in the cell inner membrane. The catalysed reaction is Typically cleaves a -Gly-|-Phe- bond to release an N-terminal, basic peptide of 5-8 residues from type IV prepilin, and then N-methylates the new N-terminal amino group, the methyl donor being S-adenosyl-L-methionine.. Its function is as follows. Cleaves type-4 fimbrial leader sequence and methylates the N-terminal (generally Phe) residue. This chain is Type 4 prepilin-like proteins leader peptide-processing enzyme, found in Escherichia coli O78:H11 (strain H10407 / ETEC).